We begin with the raw amino-acid sequence, 82 residues long: Toxin Tpa7 (82 aa).

The signal sequence occupies residues 1 to 20 (MKGMILLISCLMLIEVVVEC). The LCN-type CS-alpha/beta domain maps to 21–82 (KEGYPLDTLN…KIWDLKKNKC (62 aa)). 4 disulfide bridges follow: Cys-32/Cys-82, Cys-36/Cys-58, Cys-44/Cys-63, and Cys-48/Cys-65.

The protein belongs to the long (4 C-C) scorpion toxin superfamily. Sodium channel inhibitor family. Beta subfamily. In terms of tissue distribution, expressed by the venom gland.

It is found in the secreted. Functionally, beta toxins bind voltage-independently at site-4 of sodium channels (Nav) and shift the voltage of activation toward more negative potentials thereby affecting sodium channel activation and promoting spontaneous and repetitive firing. The protein is Toxin Tpa7 of Tityus pachyurus (Colombian scorpion).